A 169-amino-acid polypeptide reads, in one-letter code: Ferric-chelate reductase (NAD(P)H) (169 aa).

Tyr7 serves as a coordination point for NADP(+). Residues 27–31 (QIANT), 45–52 (CLNKENDT), 82–84 (RKS), and Lys89 each bind FMN. NADP(+) contacts are provided by residues His126 and 147-154 (YADYHLMK).

Belongs to the non-flavoprotein flavin reductase family. Homodimer. It depends on FMN as a cofactor. Requires FAD as cofactor.

The enzyme catalyses 2 a Fe(II)-siderophore + NAD(+) + H(+) = 2 a Fe(III)-siderophore + NADH. It carries out the reaction 2 a Fe(II)-siderophore + NADP(+) + H(+) = 2 a Fe(III)-siderophore + NADPH. Catalyzes the reduction of bound ferric iron (Fe(3+)) in a variety of iron chelators (siderophores) using NAD(P)H as the electron donor, resulting in the release of Fe(2+). Not active with uncomplexed Fe(3+). Also reduces FMN and FAD, but not riboflavin. The sequence is that of Ferric-chelate reductase (NAD(P)H) from Archaeoglobus fulgidus (strain ATCC 49558 / DSM 4304 / JCM 9628 / NBRC 100126 / VC-16).